The sequence spans 1092 residues: Probable cellulose synthase A catalytic subunit 5 [UDP-forming] (1092 aa).

The Cytoplasmic segment spans residues 1-279 (MEASAGLVAG…SSSLVNPYRM (279 aa)). Zn(2+) contacts are provided by Cys-39, Cys-42, Cys-58, Cys-61, Cys-66, Cys-69, Cys-81, and Cys-84. The RING-type; degenerate zinc-finger motif lies at 39–85 (CQICGDDVGLTPDGEPFVACNECAFPVCRDCYEYERREGTQNCPQCK). A helical membrane pass occupies residues 280–300 (IIIIRLVVLGFFFHYRVMHPV). Residues 301–302 (PD) are Extracellular-facing. A helical transmembrane segment spans residues 303–323 (AFALWLISVICEIWFAMSWIL). Over 324-868 (DQFPKWFPIE…CLERFSYINS (545 aa)) the chain is Cytoplasmic. Positions 362, 368, 369, and 398 each coordinate UDP-alpha-D-glucose. Residue Asp-398 is part of the active site. The stretch at 450–479 (NFVRERRAMKREYEEFKVRINALVAKAQKV) forms a coiled coil. A UDP-alpha-D-glucose-binding site is contributed by Lys-539. 2 residues coordinate Mn(2+): Lys-540 and Asp-564. Asp-792 is a catalytic residue. A helical transmembrane segment spans residues 869–889 (IVYPWTSIPLLAYCTLPAICL). Residues 890–901 (LTGKFITPELTN) are Extracellular-facing. Residues 902-922 (IASLWFMSLFICIFATGILEM) form a helical membrane-spanning segment. The Cytoplasmic segment spans residues 923 to 938 (RWSGVGIDDWWRNEQF). A helical membrane pass occupies residues 939–959 (WVIGGVSSHLFAVFQGLLKVI). Residues 960–987 (AGIDTSFTVTSKGGDDEEFSELYTFKWT) lie on the Extracellular side of the membrane. Residues 988 to 1008 (TLLIPPTTLLLLNFIGVVAGV) traverse the membrane as a helical segment. Residues 1009-1019 (SNAINNGYESW) are Cytoplasmic-facing. Residues 1020–1040 (GPLFGKLFFAFWVIVHLYPFL) traverse the membrane as a helical segment. Over 1041-1049 (KGLVGRQNR) the chain is Extracellular. Residues 1050–1070 (TPTIVIVWSILLASIFSLLWV) traverse the membrane as a helical segment. Residues 1071-1092 (RIDPFLAKNDGPLLEECGLDCN) are Cytoplasmic-facing.

The protein belongs to the glycosyltransferase 2 family. Plant cellulose synthase subfamily. Mn(2+) serves as cofactor. Zn(2+) is required as a cofactor.

The protein localises to the cell membrane. The enzyme catalyses [(1-&gt;4)-beta-D-glucosyl](n) + UDP-alpha-D-glucose = [(1-&gt;4)-beta-D-glucosyl](n+1) + UDP + H(+). It functions in the pathway glycan metabolism; plant cellulose biosynthesis. In terms of biological role, probable catalytic subunit of cellulose synthase terminal complexes ('rosettes'), required for beta-1,4-glucan microfibril crystallization, a major mechanism of the cell wall formation. This is Probable cellulose synthase A catalytic subunit 5 [UDP-forming] (CESA5) from Oryza sativa subsp. indica (Rice).